Reading from the N-terminus, the 333-residue chain is Cytochrome f (333 aa).

The signal sequence occupies residues 1–44 (MRNASVTARLTRSVRAIVKTLLIAIATVTFYFSCDLALPQSAAA). 4 residues coordinate heme: Tyr45, Cys66, Cys69, and His70. The helical transmembrane segment at 301–318 (GLIAFVALVMLAQVMLVL) threads the bilayer.

This sequence belongs to the cytochrome f family. In terms of assembly, the 4 large subunits of the cytochrome b6-f complex are cytochrome b6, subunit IV (17 kDa polypeptide, PetD), cytochrome f and the Rieske protein, while the 4 small subunits are PetG, PetL, PetM and PetN. The complex functions as a dimer. Requires heme as cofactor.

Its subcellular location is the cellular thylakoid membrane. Its function is as follows. Component of the cytochrome b6-f complex, which mediates electron transfer between photosystem II (PSII) and photosystem I (PSI), cyclic electron flow around PSI, and state transitions. In Desmonostoc sp. (strain PCC 7906) (Nostoc sp. (strain PCC 7906)), this protein is Cytochrome f (petA).